Consider the following 398-residue polypeptide: Succinate--CoA ligase [ADP-forming] subunit beta (398 aa).

The ATP-grasp domain occupies 9 to 254 (KRLLHTYGAP…LTEEDPKEIE (246 aa)). Residues lysine 46, 53–55 (GRG), glutamate 109, alanine 112, and glutamate 117 contribute to the ATP site. 2 residues coordinate Mg(2+): asparagine 209 and aspartate 223. Residues asparagine 274 and 331-333 (GIM) contribute to the substrate site.

Belongs to the succinate/malate CoA ligase beta subunit family. As to quaternary structure, heterotetramer of two alpha and two beta subunits. Mg(2+) serves as cofactor.

It catalyses the reaction succinate + ATP + CoA = succinyl-CoA + ADP + phosphate. It carries out the reaction GTP + succinate + CoA = succinyl-CoA + GDP + phosphate. Its pathway is carbohydrate metabolism; tricarboxylic acid cycle; succinate from succinyl-CoA (ligase route): step 1/1. In terms of biological role, succinyl-CoA synthetase functions in the citric acid cycle (TCA), coupling the hydrolysis of succinyl-CoA to the synthesis of either ATP or GTP and thus represents the only step of substrate-level phosphorylation in the TCA. The beta subunit provides nucleotide specificity of the enzyme and binds the substrate succinate, while the binding sites for coenzyme A and phosphate are found in the alpha subunit. This Brucella abortus (strain S19) protein is Succinate--CoA ligase [ADP-forming] subunit beta.